A 177-amino-acid polypeptide reads, in one-letter code: Large ribosomal subunit protein uL6 (177 aa).

An N6-acetyllysine modification is found at K44.

The protein belongs to the universal ribosomal protein uL6 family. Part of the 50S ribosomal subunit.

In terms of biological role, this protein binds to the 23S rRNA, and is important in its secondary structure. It is located near the subunit interface in the base of the L7/L12 stalk, and near the tRNA binding site of the peptidyltransferase center. This Escherichia coli O139:H28 (strain E24377A / ETEC) protein is Large ribosomal subunit protein uL6.